The following is a 440-amino-acid chain: MFLAQEIIRKKRDGHALSDEEIRFFINGIRDNTISEGQIAALAMTIFFHDMTMPERVSLTMAMRDSGTVLDWKSLNLNGPIVDKHSTGGVGDVTSLMLGPMVAACGGYVPMISGRGLGHTGGTLDKLEAIPGFDIFPDDNRFREIIQDVGVAIIGQTSSLAPADKRFYATRDITATVDSIPLITGSILAKKLAEGLDALVMDVKVGSGAFMPTYELSKALAEAIVGVANGAGVRTTALLTDMNQVLASSAGNAVEVREAVQFLTGEYRNPRLFDVTMALCVEMLISGQLAKDDAEARAKLQAVLDNGKAAEVFGRMVAAQKGPSDFVENYDKYLPTAMLSKAVYADTEGFISAMDTRALGMAVVSMGGGRRQASDTIDYSVGFTDMARLGDSIDGQRPLAVIHAKDEASWQEAAKAVKAAIILDDKAPASTPSVYRRITE.

The protein belongs to the thymidine/pyrimidine-nucleoside phosphorylase family. Homodimer.

The catalysed reaction is thymidine + phosphate = 2-deoxy-alpha-D-ribose 1-phosphate + thymine. Its pathway is pyrimidine metabolism; dTMP biosynthesis via salvage pathway; dTMP from thymine: step 1/2. In terms of biological role, the enzymes which catalyze the reversible phosphorolysis of pyrimidine nucleosides are involved in the degradation of these compounds and in their utilization as carbon and energy sources, or in the rescue of pyrimidine bases for nucleotide synthesis. The chain is Thymidine phosphorylase from Salmonella heidelberg (strain SL476).